We begin with the raw amino-acid sequence, 416 residues long: Serine hydroxymethyltransferase (416 aa).

Residues leucine 121 and 125-127 contribute to the (6S)-5,6,7,8-tetrahydrofolate site; that span reads GHL. Position 229 is an N6-(pyridoxal phosphate)lysine (lysine 229). (6S)-5,6,7,8-tetrahydrofolate-binding positions include glutamate 245 and 354–356; that span reads SPF.

The protein belongs to the SHMT family. Homodimer. Requires pyridoxal 5'-phosphate as cofactor.

The protein localises to the cytoplasm. The enzyme catalyses (6R)-5,10-methylene-5,6,7,8-tetrahydrofolate + glycine + H2O = (6S)-5,6,7,8-tetrahydrofolate + L-serine. Its pathway is one-carbon metabolism; tetrahydrofolate interconversion. It functions in the pathway amino-acid biosynthesis; glycine biosynthesis; glycine from L-serine: step 1/1. Its function is as follows. Catalyzes the reversible interconversion of serine and glycine with tetrahydrofolate (THF) serving as the one-carbon carrier. This reaction serves as the major source of one-carbon groups required for the biosynthesis of purines, thymidylate, methionine, and other important biomolecules. Also exhibits THF-independent aldolase activity toward beta-hydroxyamino acids, producing glycine and aldehydes, via a retro-aldol mechanism. The chain is Serine hydroxymethyltransferase from Aliivibrio salmonicida (strain LFI1238) (Vibrio salmonicida (strain LFI1238)).